The following is a 117-amino-acid chain: Hainantoxin-XV.2 (117 aa).

The first 20 residues, 1 to 20 (MKLCAVIIASLLVCAAVASS), serve as a signal peptide directing secretion. The tract at residues 18–55 (ASSSDNQKEFAQEKEMTREETQSLGEHEKDDEVTGSEE) is disordered. Positions 21–56 (SDNQKEFAQEKEMTREETQSLGEHEKDDEVTGSEER) are excised as a propeptide. Residues 23–55 (NQKEFAQEKEMTREETQSLGEHEKDDEVTGSEE) are compositionally biased toward basic and acidic residues. Cystine bridges form between Cys-58/Cys-72, Cys-65/Cys-78, Cys-69/Cys-115, and Cys-71/Cys-91.

Belongs to the neurotoxin 03 (Tx2) family. 02 subfamily. HNTX-XV sub-subfamily. Expressed by the venom gland.

The protein resides in the secreted. In terms of biological role, putative ion channel inhibitor. The sequence is that of Hainantoxin-XV.2 from Cyriopagopus hainanus (Chinese bird spider).